Reading from the N-terminus, the 507-residue chain is ATP synthase subunit alpha (507 aa).

168–175 serves as a coordination point for ATP; it reads GDRKTGKT.

It belongs to the ATPase alpha/beta chains family. In terms of assembly, F-type ATPases have 2 components, CF(1) - the catalytic core - and CF(0) - the membrane proton channel. CF(1) has five subunits: alpha(3), beta(3), gamma(1), delta(1), epsilon(1). CF(0) has three main subunits: a(1), b(2) and c(9-12). The alpha and beta chains form an alternating ring which encloses part of the gamma chain. CF(1) is attached to CF(0) by a central stalk formed by the gamma and epsilon chains, while a peripheral stalk is formed by the delta and b chains.

The protein localises to the cell inner membrane. It carries out the reaction ATP + H2O + 4 H(+)(in) = ADP + phosphate + 5 H(+)(out). Its function is as follows. Produces ATP from ADP in the presence of a proton gradient across the membrane. The alpha chain is a regulatory subunit. The sequence is that of ATP synthase subunit alpha from Ehrlichia ruminantium (strain Gardel).